A 477-amino-acid chain; its full sequence is Aspartyl/glutamyl-tRNA(Asn/Gln) amidotransferase subunit B (477 aa).

It belongs to the GatB/GatE family. GatB subfamily. As to quaternary structure, heterotrimer of A, B and C subunits.

The catalysed reaction is L-glutamyl-tRNA(Gln) + L-glutamine + ATP + H2O = L-glutaminyl-tRNA(Gln) + L-glutamate + ADP + phosphate + H(+). The enzyme catalyses L-aspartyl-tRNA(Asn) + L-glutamine + ATP + H2O = L-asparaginyl-tRNA(Asn) + L-glutamate + ADP + phosphate + 2 H(+). Allows the formation of correctly charged Asn-tRNA(Asn) or Gln-tRNA(Gln) through the transamidation of misacylated Asp-tRNA(Asn) or Glu-tRNA(Gln) in organisms which lack either or both of asparaginyl-tRNA or glutaminyl-tRNA synthetases. The reaction takes place in the presence of glutamine and ATP through an activated phospho-Asp-tRNA(Asn) or phospho-Glu-tRNA(Gln). The polypeptide is Aspartyl/glutamyl-tRNA(Asn/Gln) amidotransferase subunit B (Clostridium tetani (strain Massachusetts / E88)).